The chain runs to 450 residues: Bifunctional apoptosis regulator (450 aa).

The segment covering 1 to 20 (MEEPQKNDLSMREQEEEHPV) has biased composition (basic and acidic residues). The segment at 1–25 (MEEPQKNDLSMREQEEEHPVRSSGP) is disordered. The Cytoplasmic segment spans residues 1 to 140 (MEEPQKNDLS…PSTGRVNPQR (140 aa)). The RING-type zinc finger occupies 34-74 (CHCCYDTLVNPTTLNCGHSFCRHCLALWWMSSKKTECPECR). Residues 141–161 (GGGFFSGVLTALTGVAVILLV) traverse the membrane as a helical segment. Topologically, residues 162–331 (YHWRSRESEH…REPTWKQWRE (170 aa)) are extracellular. The 68-residue stretch at 182–249 (WTMEEVVLWL…LTELERVRAL (68 aa)) folds into the SAM domain. N-linked (GlcNAc...) asparagine glycosylation is found at Asn-232 and Asn-308. The helical transmembrane segment at 332-352 (FLVKYSFLPYQLIAEFAWDWL) threads the bilayer. Topologically, residues 353–360 (EVHYWTSR) are cytoplasmic. Residues 361 to 381 (FLIVNAVLLSVLELFSFWRIW) traverse the membrane as a helical segment. Residues 382–404 (SRSELKTVPQRMWSHFWKVSTQG) lie on the Extracellular side of the membrane. The helical transmembrane segment at 405–425 (LFMAMFWPLIPQFVCNCLFYW) threads the bilayer. Over 426–450 (ALYFNPIINIDLVVKEVRRLETQVL) the chain is Cytoplasmic.

In terms of assembly, interacts with CASP8, BCL2 and BCL2L1 through SAM domain and also with HIP1, IFT57, ESRRBL1 and BCAP31. Interacts with NGFR; this interaction inhibits NF-kappa-B and JNK-related signaling pathways. Mediates RING-dependent self-ubiquitination leading to proteasomal degradation.

It is found in the endoplasmic reticulum membrane. The enzyme catalyses S-ubiquitinyl-[E2 ubiquitin-conjugating enzyme]-L-cysteine + [acceptor protein]-L-lysine = [E2 ubiquitin-conjugating enzyme]-L-cysteine + N(6)-ubiquitinyl-[acceptor protein]-L-lysine.. In terms of biological role, membrane-bound E3 ubiquitin ligase that plays a role in several processes including apoptosis regulation or reticulum endoplasmic stress. Has anti-apoptotic activity, both for apoptosis triggered via death-receptors and via mitochondrial factors. Contributes to the dynamic control of IRE1/ERN1 signaling during ER stress by inducing BAX inhibitor 1/TMBIM6 proteasomal degradation. Promotes the activation of TGF-beta signaling by mediating the 'Lys-63'-linked ubiquitination of TGFBR1 which is critical to activate the pathway. Together with NGFR, negatively regulates NF-kappa-B and JNK-related signaling pathways. Promotes the proteasome-mediated degradation of PNPLA3, a protein involveld in lipid metabolism. In Mus musculus (Mouse), this protein is Bifunctional apoptosis regulator (Bfar).